Consider the following 348-residue polypeptide: D-alanine--D-alanine ligase (348 aa).

The 209-residue stretch at 136 to 344 folds into the ATP-grasp domain; the sequence is KSVFKSYNLP…LEKLVASLIE (209 aa). 171–226 lines the ATP pocket; sequence NKIINYPCFIKPANLGSSVGITKAYSKEEFITGIEFAAKYDERIIVEKSIEGRELE. Mg(2+) is bound by residues Asp-297, Glu-311, and Asn-313.

Belongs to the D-alanine--D-alanine ligase family. Mg(2+) serves as cofactor. Requires Mn(2+) as cofactor.

The protein localises to the cytoplasm. It catalyses the reaction 2 D-alanine + ATP = D-alanyl-D-alanine + ADP + phosphate + H(+). Its pathway is cell wall biogenesis; peptidoglycan biosynthesis. In terms of biological role, cell wall formation. This is D-alanine--D-alanine ligase from Prochlorococcus marinus (strain NATL1A).